A 444-amino-acid chain; its full sequence is Phosphoglucosamine mutase (444 aa).

Ser-102 serves as the catalytic Phosphoserine intermediate. 4 residues coordinate Mg(2+): Ser-102, Asp-241, Asp-243, and Asp-245. The residue at position 102 (Ser-102) is a Phosphoserine.

The protein belongs to the phosphohexose mutase family. Mg(2+) serves as cofactor. Activated by phosphorylation.

It catalyses the reaction alpha-D-glucosamine 1-phosphate = D-glucosamine 6-phosphate. Its function is as follows. Catalyzes the conversion of glucosamine-6-phosphate to glucosamine-1-phosphate. The sequence is that of Phosphoglucosamine mutase from Actinobacillus pleuropneumoniae serotype 5b (strain L20).